Reading from the N-terminus, the 174-residue chain is MTKLIIMTLCLIMSFIFMQMKHPLSMGLMLLIQTFLTCLITSIYVKTFWFSYVLFLIFLGGMLILFIYVTSLSSNEMFSMSFSLTLISLIIFSIFTIVFFMIDKSLIEQFITNMEMEKLSNMNNLINENILSLNKMYNFPTNLITLLLINYLFLTLLVTVKITKKFYGPLRPMN.

4 helical membrane passes run 25–45 (SMGL…SIYV), 48–68 (FWFS…LFIY), 82–102 (FSLT…FFMI), and 143–163 (LITL…VKIT).

The protein belongs to the complex I subunit 6 family.

It localises to the mitochondrion membrane. It catalyses the reaction a ubiquinone + NADH + 5 H(+)(in) = a ubiquinol + NAD(+) + 4 H(+)(out). Core subunit of the mitochondrial membrane respiratory chain NADH dehydrogenase (Complex I) that is believed to belong to the minimal assembly required for catalysis. Complex I functions in the transfer of electrons from NADH to the respiratory chain. The immediate electron acceptor for the enzyme is believed to be ubiquinone. The polypeptide is NADH-ubiquinone oxidoreductase chain 6 (ND6) (Anopheles albimanus (New world malaria mosquito)).